Consider the following 374-residue polypeptide: MDTAGKVIKCKAAVLWGTNQPFSIEDIEVAPPKAKEVRVKILATGICGTDDHVIKGTMVSKFPVIVGHEAVGIVESVGEEVTTVRPGDKVIPLFLPQCRECNPCRNPEGNLCIRSDLTGRGVLADGTTRFTCKGKPVQHFMNTSTFTEYTVLDESSVAKIDAEAPPEKACLIGCGFSTGYGAAVKTAKVSPGSTCAVFGLGGVGLSVVMGCKAAGASRIIGIDINKDKFQKALDVGATECINPRDFTKPISEVLSDMTGNTVQYTFEVIGRLETMVDALSSCHMNYGTSVVVGAPPSAKMLSYDPMLLFTGRTWKGCVFGGWKSRDDVPKLVTEFLEKKFDLGQLITHTLPFHNISEGFELLYSGQSIRTVLTF.

Met-1 bears the N-acetylmethionine mark. Cys-47, His-68, Cys-98, Cys-101, Cys-104, Cys-112, and Cys-174 together coordinate Zn(2+). NAD(+)-binding positions include 199 to 204 (GLGGVG), Asp-223, Lys-228, 292 to 294 (VGA), and Arg-369.

Belongs to the zinc-containing alcohol dehydrogenase family. Class-IV subfamily. Homodimer. Requires Zn(2+) as cofactor. Preferentially expressed in stomach.

It is found in the cytoplasm. It carries out the reaction a primary alcohol + NAD(+) = an aldehyde + NADH + H(+). The enzyme catalyses 10-hydroxydecanoate + NAD(+) = 10-oxodecanoate + NADH + H(+). The catalysed reaction is all-trans-retinol + NAD(+) = all-trans-retinal + NADH + H(+). It catalyses the reaction 9-cis-retinol + NAD(+) = 9-cis-retinal + NADH + H(+). It carries out the reaction all-trans-3,4-didehydroretinol + NAD(+) = all-trans-3,4-didehydroretinal + NADH + H(+). The enzyme catalyses all-trans-4-hydroxyretinol + NAD(+) = all-trans-4-hydroxyretinal + NADH + H(+). The catalysed reaction is all-trans-4-oxoretinol + NAD(+) = all-trans-4-oxoretinal + NADH + H(+). It catalyses the reaction 12-hydroxydodecanoate + NAD(+) = 12-oxododecanoate + NADH + H(+). It carries out the reaction 16-hydroxyhexadecanoate + NAD(+) = 16-oxohexadecanoate + NADH + H(+). The enzyme catalyses hexan-1-ol + NAD(+) = hexanal + NADH + H(+). The catalysed reaction is (E)-hex-2-en-1-ol + NAD(+) = (E)-hex-2-enal + NADH + H(+). It catalyses the reaction (E)-4-hydroxynon-2-en-1-ol + NAD(+) = (E)-4-hydroxynon-2-enal + NADH + H(+). Retinol oxidation is inhibited by the detergent Tween 80. Ethanol inhibits both all-trans-retinol and 9-cis-retinol oxidation. 13-cis-retinol is an effective competitive inhibitor of the 9-cis-retinol oxidation. All-trans-retinoic acid is a powerful inhibitor of all-trans-retinol oxidation. 13-cis-retinoic acid is a powerful inhibitor of all-trans-retinol oxidation. Cimetidine and ranitidine inhibited ethanol oxidation. In terms of biological role, catalyzes the NAD-dependent oxidation of all-trans-retinol, alcohol, aldehyde and omega-hydroxy fatty acids and their derivatives. Oxidizes preferentially all trans-retinol, all-trans-4-hydroxyretinol, 9-cis-retinol, 2-hexenol, and long chain omega-hydroxy fatty acids such as juniperic acid. In vitro can also catalyze the NADH-dependent reduction of all-trans-retinal and aldehydes and their derivatives. Reduces preferentially all trans-retinal, all-trans-4-oxoretinal and hexanal. Catalyzes in the oxidative direction with higher efficiency. Therefore may participate in retinoid metabolism, fatty acid omega-oxidation, and elimination of cytotoxic aldehydes produced by lipid peroxidation. This chain is All-trans-retinol dehydrogenase [NAD(+)] ADH7 (Adh7), found in Rattus norvegicus (Rat).